The sequence spans 186 residues: dTTP/UTP pyrophosphatase (186 aa).

Aspartate 70 (proton acceptor) is an active-site residue.

This sequence belongs to the Maf family. YhdE subfamily. A divalent metal cation serves as cofactor.

The protein resides in the cytoplasm. The enzyme catalyses dTTP + H2O = dTMP + diphosphate + H(+). The catalysed reaction is UTP + H2O = UMP + diphosphate + H(+). Its function is as follows. Nucleoside triphosphate pyrophosphatase that hydrolyzes dTTP and UTP. May have a dual role in cell division arrest and in preventing the incorporation of modified nucleotides into cellular nucleic acids. The polypeptide is dTTP/UTP pyrophosphatase (Vibrio vulnificus (strain CMCP6)).